Reading from the N-terminus, the 116-residue chain is Large ribosomal subunit protein uL18 (116 aa).

Belongs to the universal ribosomal protein uL18 family. As to quaternary structure, part of the 50S ribosomal subunit; part of the 5S rRNA/L5/L18/L25 subcomplex. Contacts the 5S and 23S rRNAs.

Functionally, this is one of the proteins that bind and probably mediate the attachment of the 5S RNA into the large ribosomal subunit, where it forms part of the central protuberance. The chain is Large ribosomal subunit protein uL18 from Pseudomonas putida (strain GB-1).